The chain runs to 240 residues: Triosephosphate isomerase (240 aa).

Substrate is bound at residue 8–10 (NWK). The active-site Electrophile is the His93. Residue Glu160 is the Proton acceptor of the active site. Residue Gly166 participates in substrate binding.

It belongs to the triosephosphate isomerase family. As to quaternary structure, homodimer.

It localises to the cytoplasm. It carries out the reaction D-glyceraldehyde 3-phosphate = dihydroxyacetone phosphate. Its pathway is carbohydrate biosynthesis; gluconeogenesis. The protein operates within carbohydrate degradation; glycolysis; D-glyceraldehyde 3-phosphate from glycerone phosphate: step 1/1. In terms of biological role, involved in the gluconeogenesis. Catalyzes stereospecifically the conversion of dihydroxyacetone phosphate (DHAP) to D-glyceraldehyde-3-phosphate (G3P). The sequence is that of Triosephosphate isomerase from Ehrlichia chaffeensis (strain ATCC CRL-10679 / Arkansas).